The chain runs to 363 residues: Trichothecene biosynthesis protein 14 (363 aa).

This sequence belongs to the TRI14 family.

Its function is as follows. Part of the gene cluster that mediates the production of the antimicrobial trichothecene harzianum A (HA) that plays a role in Botrytis cinerea antagonistic activity and plant defense priming. The biosynthesis of harzianum A begins with the cyclization of farnesyl diphosphate to trichodiene and is catalyzed by the trichodiene synthase TRI5. Trichodiene undergoes a series of oxygenations catalyzed by the cytochrome P450 monooxygenase TRI4. TRI4 controls the addition of 3 oxygens at C-2, C-11, and the C-12, C-13-epoxide to form the intermediate isotrichodiol. Isotrichodiol then undergoes a non-enzymatic isomerization and cyclization to form 12,13-epoxytrichothec-9-ene (EPT) which is further converted to trichodermol by the cytochrome P450 monooxygenase TRI11 via C-4 hydroxylation. The last step of HA synthesis is esterification of an octatriendioyl moiety to the C-4 oxygen of trichodermol. The octatriendioyl moiety is probably produced by the polyketide synthase TRI17 and the esterification performed by the trichothecene O-acetyltransferase TRI3. This chain is Trichothecene biosynthesis protein 14, found in Trichoderma arundinaceum.